The chain runs to 240 residues: Transcriptional regulatory protein BaeR (240 aa).

The Response regulatory domain occupies 12-125 (RILIVEDEPK…EVVARVKTIL (114 aa)). Asp61 carries the post-translational modification 4-aspartylphosphate. The ompR/PhoB-type DNA-binding region spans 131–234 (QRELQQQDAE…VYGVGYRWEA (104 aa)).

Phosphorylated by BaeS.

It localises to the cytoplasm. Its function is as follows. Member of the two-component regulatory system BaeS/BaeR. Activates the mdtABCD operon. This Escherichia coli O6:H1 (strain CFT073 / ATCC 700928 / UPEC) protein is Transcriptional regulatory protein BaeR (baeR).